The chain runs to 294 residues: MFQGVYTAIITPFKNDKIDYDSYNKLLEKQIKAGVNGVVPCGTTGESPTLSHTEHAELIRETVKAVQGKIQVVAGTGSNSTREAIELTEAACKDSVDGILSVNPYYNKPTQEGLFQHFQAVAEHSSVPVMLYNIPGRTSINLQPETVFRLSEIKRIRSMKEATGDLGQMGKLISLVGNKMTVLSGDDNLTLPLLAIGGVGVVSVVSNLFPKAMVEMVKYFQDGRVIEARKIHYDFIEAFALAFMETNPIPIKAAMSWFGHCEPEIRLPLTRLSQNETSVKFKKALEVLKEKGYE.

T44 is a pyruvate binding site. The active-site Proton donor/acceptor is the Y132. The active-site Schiff-base intermediate with substrate is K160. V202 is a binding site for pyruvate.

This sequence belongs to the DapA family. In terms of assembly, homotetramer; dimer of dimers.

It is found in the cytoplasm. It catalyses the reaction L-aspartate 4-semialdehyde + pyruvate = (2S,4S)-4-hydroxy-2,3,4,5-tetrahydrodipicolinate + H2O + H(+). The protein operates within amino-acid biosynthesis; L-lysine biosynthesis via DAP pathway; (S)-tetrahydrodipicolinate from L-aspartate: step 3/4. In terms of biological role, catalyzes the condensation of (S)-aspartate-beta-semialdehyde [(S)-ASA] and pyruvate to 4-hydroxy-tetrahydrodipicolinate (HTPA). This Leptospira borgpetersenii serovar Hardjo-bovis (strain L550) protein is 4-hydroxy-tetrahydrodipicolinate synthase.